Consider the following 415-residue polypeptide: MNGNEFGRLFRLTTFGESHGDAMGCTVSGVPAGVELSEEAIQEDLDRRKPGQSMITTSRGEPDKVSIKSGLQDGYTTGTPIGMVIQNKDARSGKYEPFITAPRPSHGDYTYSAKFGTRNWGGGGRSSARETVNWVAAGGVAKQVLAQSDYDVQIKAHVCQIGDVVADDVTWEEMLEHSEDNEVRCGDPDAAEEMRDLADEYQKEGDSIGGAIYFECRGVPRGLGAPRFDSIPARLGQAMYSIPAVTDFELGIGRDARTATGTDYTEDWEFGESEATASENASGDEPRARGDPKPVGNDHGGIQGGITTGDPIYGEVTWHAPVSFPKTQETVDWETGERKEITVTGRHDPVLPPRAVPVVEAMLYCTVLDFMLLGGRINPDRLDDRPGEYDTDYHPSSPRNDPEDADTHATTVDED.

The segment at 43 to 72 (EDLDRRKPGQSMITTSRGEPDKVSIKSGLQ) is disordered. R48 provides a ligand contact to NADP(+). Residues 125 to 127 (RSS), G304, 319 to 323 (HAPVS), and R346 contribute to the FMN site. The tract at residues 262–310 (TDYTEDWEFGESEATASENASGDEPRARGDPKPVGNDHGGIQGGITTGD) is disordered. The segment covering 298–307 (DHGGIQGGIT) has biased composition (gly residues). Residues 379 to 393 (PDRLDDRPGEYDTDY) show a composition bias toward basic and acidic residues. The disordered stretch occupies residues 379–415 (PDRLDDRPGEYDTDYHPSSPRNDPEDADTHATTVDED).

Belongs to the chorismate synthase family. Requires FMNH2 as cofactor.

It catalyses the reaction 5-O-(1-carboxyvinyl)-3-phosphoshikimate = chorismate + phosphate. Its pathway is metabolic intermediate biosynthesis; chorismate biosynthesis; chorismate from D-erythrose 4-phosphate and phosphoenolpyruvate: step 7/7. Its function is as follows. Catalyzes the anti-1,4-elimination of the C-3 phosphate and the C-6 proR hydrogen from 5-enolpyruvylshikimate-3-phosphate (EPSP) to yield chorismate, which is the branch point compound that serves as the starting substrate for the three terminal pathways of aromatic amino acid biosynthesis. This reaction introduces a second double bond into the aromatic ring system. This Halomicrobium mukohataei (strain ATCC 700874 / DSM 12286 / JCM 9738 / NCIMB 13541) (Haloarcula mukohataei) protein is Chorismate synthase.